Reading from the N-terminus, the 274-residue chain is Phosphatidylglycerol--prolipoprotein diacylglyceryl transferase (274 aa).

Helical transmembrane passes span 24 to 44, 60 to 80, 96 to 116, and 122 to 142; these read WYAL…RFLS, LLVW…VVFY, WHGG…TVLF, and LSVA…LFFG. R143 serves as a coordination point for a 1,2-diacyl-sn-glycero-3-phospho-(1'-sn-glycerol). A run of 3 helical transmembrane segments spans residues 182–202, 207–227, and 241–261; these read ATLE…FTAL, GQII…AEFF, and VTMG…VFVV.

This sequence belongs to the Lgt family.

It localises to the cell inner membrane. The enzyme catalyses L-cysteinyl-[prolipoprotein] + a 1,2-diacyl-sn-glycero-3-phospho-(1'-sn-glycerol) = an S-1,2-diacyl-sn-glyceryl-L-cysteinyl-[prolipoprotein] + sn-glycerol 1-phosphate + H(+). It functions in the pathway protein modification; lipoprotein biosynthesis (diacylglyceryl transfer). Its function is as follows. Catalyzes the transfer of the diacylglyceryl group from phosphatidylglycerol to the sulfhydryl group of the N-terminal cysteine of a prolipoprotein, the first step in the formation of mature lipoproteins. The chain is Phosphatidylglycerol--prolipoprotein diacylglyceryl transferase from Rhodospirillum rubrum (strain ATCC 11170 / ATH 1.1.1 / DSM 467 / LMG 4362 / NCIMB 8255 / S1).